We begin with the raw amino-acid sequence, 153 residues long: Ribosome maturation factor RimP (153 aa).

This sequence belongs to the RimP family.

It localises to the cytoplasm. In terms of biological role, required for maturation of 30S ribosomal subunits. The polypeptide is Ribosome maturation factor RimP (Nostoc punctiforme (strain ATCC 29133 / PCC 73102)).